We begin with the raw amino-acid sequence, 122 residues long: S-adenosylmethionine decarboxylase proenzyme (122 aa).

The active-site Schiff-base intermediate with substrate; via pyruvic acid is the Ser-63. Pyruvic acid (Ser); by autocatalysis is present on Ser-63. Residue His-68 is the Proton acceptor; for processing activity of the active site. Catalysis depends on Cys-83, which acts as the Proton donor; for catalytic activity.

Belongs to the prokaryotic AdoMetDC family. Type 1 subfamily. In terms of assembly, heterotetramer of two alpha and two beta chains arranged as a dimer of alpha/beta heterodimers. Requires pyruvate as cofactor. Post-translationally, is synthesized initially as an inactive proenzyme. Formation of the active enzyme involves a self-maturation process in which the active site pyruvoyl group is generated from an internal serine residue via an autocatalytic post-translational modification. Two non-identical subunits are generated from the proenzyme in this reaction, and the pyruvate is formed at the N-terminus of the alpha chain, which is derived from the carboxyl end of the proenzyme. The post-translation cleavage follows an unusual pathway, termed non-hydrolytic serinolysis, in which the side chain hydroxyl group of the serine supplies its oxygen atom to form the C-terminus of the beta chain, while the remainder of the serine residue undergoes an oxidative deamination to produce ammonia and the pyruvoyl group blocking the N-terminus of the alpha chain.

It carries out the reaction S-adenosyl-L-methionine + H(+) = S-adenosyl 3-(methylsulfanyl)propylamine + CO2. Its pathway is amine and polyamine biosynthesis; S-adenosylmethioninamine biosynthesis; S-adenosylmethioninamine from S-adenosyl-L-methionine: step 1/1. Functionally, catalyzes the decarboxylation of S-adenosylmethionine to S-adenosylmethioninamine (dcAdoMet), the propylamine donor required for the synthesis of the polyamines spermine and spermidine from the diamine putrescine. In Methanococcus maripaludis (strain DSM 14266 / JCM 13030 / NBRC 101832 / S2 / LL), this protein is S-adenosylmethionine decarboxylase proenzyme.